The chain runs to 93 residues: Small ribosomal subunit protein uS19 (93 aa).

This sequence belongs to the universal ribosomal protein uS19 family.

Its function is as follows. Protein S19 forms a complex with S13 that binds strongly to the 16S ribosomal RNA. This is Small ribosomal subunit protein uS19 from Mycobacterium marinum (strain ATCC BAA-535 / M).